The chain runs to 330 residues: Glycerol-3-phosphate dehydrogenase [NAD(P)+] (330 aa).

Residues serine 14, phenylalanine 15, arginine 35, and lysine 109 each contribute to the NADPH site. Residues lysine 109 and glycine 137 each contribute to the sn-glycerol 3-phosphate site. Alanine 141 serves as a coordination point for NADPH. Sn-glycerol 3-phosphate contacts are provided by lysine 192, aspartate 248, serine 258, arginine 259, and asparagine 260. Lysine 192 acts as the Proton acceptor in catalysis. Arginine 259 is a binding site for NADPH. Residues leucine 283 and glutamate 285 each contribute to the NADPH site.

This sequence belongs to the NAD-dependent glycerol-3-phosphate dehydrogenase family.

It is found in the cytoplasm. The catalysed reaction is sn-glycerol 3-phosphate + NAD(+) = dihydroxyacetone phosphate + NADH + H(+). It catalyses the reaction sn-glycerol 3-phosphate + NADP(+) = dihydroxyacetone phosphate + NADPH + H(+). It functions in the pathway membrane lipid metabolism; glycerophospholipid metabolism. Its function is as follows. Catalyzes the reduction of the glycolytic intermediate dihydroxyacetone phosphate (DHAP) to sn-glycerol 3-phosphate (G3P), the key precursor for phospholipid synthesis. This Rickettsia massiliae (strain Mtu5) protein is Glycerol-3-phosphate dehydrogenase [NAD(P)+].